Consider the following 474-residue polypeptide: Aspartyl/glutamyl-tRNA(Asn/Gln) amidotransferase subunit B (474 aa).

The protein belongs to the GatB/GatE family. GatB subfamily. In terms of assembly, heterotrimer of A, B and C subunits.

The catalysed reaction is L-glutamyl-tRNA(Gln) + L-glutamine + ATP + H2O = L-glutaminyl-tRNA(Gln) + L-glutamate + ADP + phosphate + H(+). It catalyses the reaction L-aspartyl-tRNA(Asn) + L-glutamine + ATP + H2O = L-asparaginyl-tRNA(Asn) + L-glutamate + ADP + phosphate + 2 H(+). Its function is as follows. Allows the formation of correctly charged Asn-tRNA(Asn) or Gln-tRNA(Gln) through the transamidation of misacylated Asp-tRNA(Asn) or Glu-tRNA(Gln) in organisms which lack either or both of asparaginyl-tRNA or glutaminyl-tRNA synthetases. The reaction takes place in the presence of glutamine and ATP through an activated phospho-Asp-tRNA(Asn) or phospho-Glu-tRNA(Gln). The chain is Aspartyl/glutamyl-tRNA(Asn/Gln) amidotransferase subunit B from Wolbachia sp. subsp. Brugia malayi (strain TRS).